Consider the following 252-residue polypeptide: Imidazole glycerol phosphate synthase subunit HisF (252 aa).

Catalysis depends on residues Asp11 and Asp130.

It belongs to the HisA/HisF family. In terms of assembly, heterodimer of HisH and HisF.

The protein resides in the cytoplasm. The enzyme catalyses 5-[(5-phospho-1-deoxy-D-ribulos-1-ylimino)methylamino]-1-(5-phospho-beta-D-ribosyl)imidazole-4-carboxamide + L-glutamine = D-erythro-1-(imidazol-4-yl)glycerol 3-phosphate + 5-amino-1-(5-phospho-beta-D-ribosyl)imidazole-4-carboxamide + L-glutamate + H(+). Its pathway is amino-acid biosynthesis; L-histidine biosynthesis; L-histidine from 5-phospho-alpha-D-ribose 1-diphosphate: step 5/9. In terms of biological role, IGPS catalyzes the conversion of PRFAR and glutamine to IGP, AICAR and glutamate. The HisF subunit catalyzes the cyclization activity that produces IGP and AICAR from PRFAR using the ammonia provided by the HisH subunit. The protein is Imidazole glycerol phosphate synthase subunit HisF of Lacticaseibacillus casei (strain BL23) (Lactobacillus casei).